Consider the following 277-residue polypeptide: Shikimate dehydrogenase (NADP(+)) (277 aa).

Shikimate-binding positions include 15-17 and threonine 62; that span reads SLS. The active-site Proton acceptor is lysine 66. Shikimate-binding residues include asparagine 87 and aspartate 102. NADP(+) contacts are provided by residues 127-131, 151-156, and isoleucine 219; these read GAGGA and NRTVDK. Tyrosine 221 is a binding site for shikimate. Residue glycine 242 coordinates NADP(+).

It belongs to the shikimate dehydrogenase family. Homodimer.

It catalyses the reaction shikimate + NADP(+) = 3-dehydroshikimate + NADPH + H(+). It functions in the pathway metabolic intermediate biosynthesis; chorismate biosynthesis; chorismate from D-erythrose 4-phosphate and phosphoenolpyruvate: step 4/7. In terms of biological role, involved in the biosynthesis of the chorismate, which leads to the biosynthesis of aromatic amino acids. Catalyzes the reversible NADPH linked reduction of 3-dehydroshikimate (DHSA) to yield shikimate (SA). This chain is Shikimate dehydrogenase (NADP(+)), found in Bacillus anthracis (strain CDC 684 / NRRL 3495).